The chain runs to 355 residues: Magnesium-chelatase subunit ChlI (355 aa).

Position 47–54 (47–54 (GDRGTGKS)) interacts with ATP.

It belongs to the Mg-chelatase subunits D/I family.

It is found in the plastid. Its subcellular location is the chloroplast. It carries out the reaction protoporphyrin IX + Mg(2+) + ATP + H2O = Mg-protoporphyrin IX + ADP + phosphate + 3 H(+). It functions in the pathway porphyrin-containing compound metabolism; chlorophyll biosynthesis. In terms of biological role, involved in chlorophyll biosynthesis; introduces a magnesium ion into protoporphyrin IX to yield Mg-protoporphyrin IX. The sequence is that of Magnesium-chelatase subunit ChlI (chlI) from Pyropia yezoensis (Susabi-nori).